The following is a 311-amino-acid chain: Ornithine carbamoyltransferase (311 aa).

Carbamoyl phosphate-binding positions include Ser54 to Thr57, Gln81, Arg105, and His132 to Gln135. Residues Asn164, Asp228, and Ser232 to Met233 contribute to the L-ornithine site. Carbamoyl phosphate-binding positions include Cys268 to Leu269 and Arg296.

It belongs to the aspartate/ornithine carbamoyltransferase superfamily. OTCase family.

The protein resides in the cytoplasm. The enzyme catalyses carbamoyl phosphate + L-ornithine = L-citrulline + phosphate + H(+). It functions in the pathway amino-acid biosynthesis; L-arginine biosynthesis; L-arginine from L-ornithine and carbamoyl phosphate: step 1/3. Reversibly catalyzes the transfer of the carbamoyl group from carbamoyl phosphate (CP) to the N(epsilon) atom of ornithine (ORN) to produce L-citrulline. This is Ornithine carbamoyltransferase from Renibacterium salmoninarum (strain ATCC 33209 / DSM 20767 / JCM 11484 / NBRC 15589 / NCIMB 2235).